The chain runs to 250 residues: MTVYFIGAGPGDPDLITVKGQRLIRQCPVILYAGSLVPQALLEGHQAGQVVNTAELDLEQIVELLAQAHRRGLDVARVHSGDPSLYGAIGEQIRHLRELGIPYEIVPGVTATAACAALLGCELTLPEVSQTLILTRYAARTKMPEGESLGDLARHRATLAIHLGVAHLAKIVEELLPHYGADCPVAVIHRASWPDQEQVRGTLGDILPKVAARNFRRTALILVGEVLAAEGFADSSLYRAEHRHLYRPGE.

It belongs to the precorrin methyltransferase family.

The enzyme catalyses precorrin-4 + S-adenosyl-L-methionine = precorrin-5 + S-adenosyl-L-homocysteine. It functions in the pathway cofactor biosynthesis; adenosylcobalamin biosynthesis; cob(II)yrinate a,c-diamide from precorrin-2 (aerobic route): step 4/10. In terms of biological role, catalyzes the methylation of C-11 in precorrin-4 to form precorrin-5. In Pseudomonas aeruginosa (strain ATCC 15692 / DSM 22644 / CIP 104116 / JCM 14847 / LMG 12228 / 1C / PRS 101 / PAO1), this protein is Precorrin-4 C(11)-methyltransferase (cobM).